The primary structure comprises 498 residues: Glycerol kinase (498 aa).

T12 contributes to the ADP binding site. The ATP site is built by T12, T13, and S14. T12 is a binding site for sn-glycerol 3-phosphate. R16 provides a ligand contact to ADP. The sn-glycerol 3-phosphate site is built by R82, E83, Y134, and D244. The glycerol site is built by R82, E83, Y134, D244, and Q245. ADP contacts are provided by T266 and G310. T266, G310, Q314, and G411 together coordinate ATP. Positions 411 and 415 each coordinate ADP.

This sequence belongs to the FGGY kinase family.

The catalysed reaction is glycerol + ATP = sn-glycerol 3-phosphate + ADP + H(+). Its pathway is polyol metabolism; glycerol degradation via glycerol kinase pathway; sn-glycerol 3-phosphate from glycerol: step 1/1. With respect to regulation, inhibited by fructose 1,6-bisphosphate (FBP). Functionally, key enzyme in the regulation of glycerol uptake and metabolism. Catalyzes the phosphorylation of glycerol to yield sn-glycerol 3-phosphate. This chain is Glycerol kinase, found in Chloroflexus aggregans (strain MD-66 / DSM 9485).